We begin with the raw amino-acid sequence, 514 residues long: MNEEQRKAGTINILAERDRKAEKDYSKYFEQVYQPPSLKEAKKRGKQEVQYNRDFHIDEKYKGMGKGRTFLIKTYGCQMNAHDTEVMAGILNALGYSATSDINEADVILINTCAIRENAENKVFSEIGNLKHLKKERPDCLIGVCGCMSQEESVVNKILKSYQNVDMVFGTHNIHHLPEILEEAYLSKAMVVEVWSKEGDIIENLPKVRDGHIKAWVNIMYGCDKFCTYCIVPFTRGKERSRRPEDIIDEVRELAREGYQEITLLGQNVNSYGKDIEGLDYELGDLLEDISKIDIPRVRFTTSHPWDFTDRMIEVIAKGGNIVPHIHLPVQSGNNQVLKIMGRKYTRESYLDLVSRIKEAIPNVALTTDIIVGYPNETEEQFEETLSLYDDVQFEHAYTYLYSQRDGTPAAKMKDNVPLEVKKERLQRLNKKVGIYSQQAMSQYEGKIVTVLCEGSSKKDENVLAGYTDKNKLVNFKGPRESIGKLVDVKIDEAKQYSLNGTFIQEHQRSMVTQ.

The MTTase N-terminal domain occupies 68 to 186; sequence RTFLIKTYGC…LPEILEEAYL (119 aa). Residues C77, C113, C147, C223, C227, and C230 each contribute to the [4Fe-4S] cluster site. The Radical SAM core domain occupies 209-439; it reads RDGHIKAWVN…NKKVGIYSQQ (231 aa). A TRAM domain is found at 442–505; the sequence is SQYEGKIVTV…QYSLNGTFIQ (64 aa).

Belongs to the methylthiotransferase family. MiaB subfamily. Monomer. It depends on [4Fe-4S] cluster as a cofactor.

It localises to the cytoplasm. It carries out the reaction N(6)-dimethylallyladenosine(37) in tRNA + (sulfur carrier)-SH + AH2 + 2 S-adenosyl-L-methionine = 2-methylsulfanyl-N(6)-dimethylallyladenosine(37) in tRNA + (sulfur carrier)-H + 5'-deoxyadenosine + L-methionine + A + S-adenosyl-L-homocysteine + 2 H(+). Functionally, catalyzes the methylthiolation of N6-(dimethylallyl)adenosine (i(6)A), leading to the formation of 2-methylthio-N6-(dimethylallyl)adenosine (ms(2)i(6)A) at position 37 in tRNAs that read codons beginning with uridine. This chain is tRNA-2-methylthio-N(6)-dimethylallyladenosine synthase, found in Staphylococcus epidermidis (strain ATCC 35984 / DSM 28319 / BCRC 17069 / CCUG 31568 / BM 3577 / RP62A).